A 343-amino-acid chain; its full sequence is Methionine import ATP-binding protein MetN 1 (343 aa).

The ABC transporter domain occupies 2–241 (IKLSNITKVF…PKTPLAQKFI (240 aa)). ATP is bound at residue 38-45 (GASGAGKS).

The protein belongs to the ABC transporter superfamily. Methionine importer (TC 3.A.1.24) family. In terms of assembly, the complex is composed of two ATP-binding proteins (MetN), two transmembrane proteins (MetI) and a solute-binding protein (MetQ).

Its subcellular location is the cell inner membrane. The enzyme catalyses L-methionine(out) + ATP + H2O = L-methionine(in) + ADP + phosphate + H(+). It catalyses the reaction D-methionine(out) + ATP + H2O = D-methionine(in) + ADP + phosphate + H(+). Functionally, part of the ABC transporter complex MetNIQ involved in methionine import. Responsible for energy coupling to the transport system. This chain is Methionine import ATP-binding protein MetN 1, found in Salmonella paratyphi A (strain ATCC 9150 / SARB42).